Consider the following 992-residue polypeptide: Aminopeptidase Q (992 aa).

Over 2 to 13 the chain is Cytoplasmic; the sequence is GPPSSSGFYVSR. The chain crosses the membrane as a helical; Signal-anchor for type II membrane protein span at residues 14 to 34; that stretch reads AVALLLAALAAALLLALAVLA. The Extracellular portion of the chain corresponds to 35 to 992; that stretch reads ALYGRCARVQ…RMTAWLRKNT (958 aa). Residues 48–92 form a disordered region; the sequence is LHHGGVPDAASSPRGTQEEQLPTWPPRPTREPAGTATPGHWRPPG. N-linked (GlcNAc...) asparagine glycosylation is present at asparagine 133. Glutamate 241 serves as a coordination point for substrate. Asparagine 262, asparagine 289, asparagine 347, and asparagine 361 each carry an N-linked (GlcNAc...) asparagine glycan. A substrate-binding site is contributed by 380 to 384; sequence SAMEN. Zn(2+) is bound at residue histidine 416. Glutamate 417 acts as the Proton acceptor in catalysis. 2 residues coordinate Zn(2+): histidine 420 and glutamate 439. Asparagine 489 is a glycosylation site (N-linked (GlcNAc...) asparagine). The active-site Proton donor is tyrosine 505. 7 N-linked (GlcNAc...) asparagine glycosylation sites follow: asparagine 584, asparagine 602, asparagine 609, asparagine 655, asparagine 811, asparagine 850, and asparagine 889.

Belongs to the peptidase M1 family. It depends on Zn(2+) as a cofactor. As to expression, expressed in skin. Expression levels do not differ between dark and light skin areas.

Its subcellular location is the membrane. Functionally, metalloprotease which may be important for placentation by regulating biological activity of key peptides at the embryo-maternal interface. Involved in coat pigmentation patterns. During skin development, may be required to establish the periodicity of tabby markings, initiating a pre-pattern at or before hair follicle development. The protein is Aminopeptidase Q (LVRN) of Acinonyx jubatus (Cheetah).